Consider the following 550-residue polypeptide: Metal transporter Nramp3 (550 aa).

A compositionally biased stretch (polar residues) spans 1–26; it reads MSGPMQRSSQPQFISSVERNNQSNGP. Residues 1 to 30 form a disordered region; that stretch reads MSGPMQRSSQPQFISSVERNNQSNGPGTPL. A run of 12 helical transmembrane segments spans residues 50–70, 83–103, 127–147, 158–178, 185–205, 233–253, 276–296, 333–353, 368–390, 397–417, 435–455, and 473–493; these read LFSY…PGNF, ELLW…SLAA, FILW…EVIG, IPVW…LLLQ, LEFL…VELG, ISLL…ALVL, AFAL…SGAV, LFAV…TYAG, WIRN…IIGG, LIII…VPLL, ISVI…YFLI, and VFSG…ILYL. Positions 523–550 are disordered; sequence GEGSLGHLPREDISSMQLPQQRTASDLD. The segment covering 536–550 has biased composition (polar residues); it reads SSMQLPQQRTASDLD.

The protein belongs to the NRAMP (TC 2.A.55) family.

It is found in the membrane. Probable metal transporter. The polypeptide is Metal transporter Nramp3 (NRAMP3) (Oryza sativa subsp. japonica (Rice)).